A 231-amino-acid polypeptide reads, in one-letter code: uncharacterized protein (231 aa).

10–34 (VVTGAGSGIGEAIATLLHEEGAKVV) provides a ligand contact to NADP(+). S140 is a substrate binding site. Y153 functions as the Proton acceptor in the catalytic mechanism.

This sequence belongs to the short-chain dehydrogenases/reductases (SDR) family.

This is an uncharacterized protein from Staphylococcus aureus (strain MW2).